Consider the following 100-residue polypeptide: Putative pterin-4-alpha-carbinolamine dehydratase (100 aa).

The protein belongs to the pterin-4-alpha-carbinolamine dehydratase family.

The enzyme catalyses (4aS,6R)-4a-hydroxy-L-erythro-5,6,7,8-tetrahydrobiopterin = (6R)-L-erythro-6,7-dihydrobiopterin + H2O. This chain is Putative pterin-4-alpha-carbinolamine dehydratase, found in Rhodopseudomonas palustris (strain ATCC BAA-98 / CGA009).